The primary structure comprises 174 residues: Gamma-crystallin A (174 aa).

Beta/gamma crystallin 'Greek key' domains are found at residues 2–40 and 41–83; these read GKIT…RVDS and GCWM…RSIP. The connecting peptide stretch occupies residues 84 to 87; sequence YTSS. Beta/gamma crystallin 'Greek key' domains are found at residues 88–128 and 129–171; these read HRIR…HVLE and GSWV…RRVM.

This sequence belongs to the beta/gamma-crystallin family.

In terms of biological role, crystallins are the dominant structural components of the vertebrate eye lens. This is Gamma-crystallin A (Cryga) from Rattus norvegicus (Rat).